A 552-amino-acid chain; its full sequence is CTP synthase (552 aa).

Positions 1–273 (MSESKKNPET…LTPIARRFNM (273 aa)) are amidoligase domain. Ser-21 serves as a coordination point for CTP. A UTP-binding site is contributed by Ser-21. Residues 22–27 (SLGKGI) and Asp-79 contribute to the ATP site. Residues Asp-79 and Glu-147 each coordinate Mg(2+). Residues 154 to 156 (DIE), 194 to 199 (KTKPTQ), and Lys-230 contribute to the CTP site. UTP is bound by residues 194-199 (KTKPTQ) and Lys-230. The region spanning 298–548 (TIAFVGKYLS…IQKSLELKKV (251 aa)) is the Glutamine amidotransferase type-1 domain. An L-glutamine-binding site is contributed by Gly-359. Cys-386 functions as the Nucleophile; for glutamine hydrolysis in the catalytic mechanism. L-glutamine is bound by residues 387–390 (LGMQ), Glu-410, and Arg-478. Active-site residues include His-521 and Glu-523.

The protein belongs to the CTP synthase family. As to quaternary structure, homotetramer.

It carries out the reaction UTP + L-glutamine + ATP + H2O = CTP + L-glutamate + ADP + phosphate + 2 H(+). The catalysed reaction is L-glutamine + H2O = L-glutamate + NH4(+). The enzyme catalyses UTP + NH4(+) + ATP = CTP + ADP + phosphate + 2 H(+). It functions in the pathway pyrimidine metabolism; CTP biosynthesis via de novo pathway; CTP from UDP: step 2/2. Its activity is regulated as follows. Allosterically activated by GTP, when glutamine is the substrate; GTP has no effect on the reaction when ammonia is the substrate. The allosteric effector GTP functions by stabilizing the protein conformation that binds the tetrahedral intermediate(s) formed during glutamine hydrolysis. Inhibited by the product CTP, via allosteric rather than competitive inhibition. Its function is as follows. Catalyzes the ATP-dependent amination of UTP to CTP with either L-glutamine or ammonia as the source of nitrogen. Regulates intracellular CTP levels through interactions with the four ribonucleotide triphosphates. This Wolinella succinogenes (strain ATCC 29543 / DSM 1740 / CCUG 13145 / JCM 31913 / LMG 7466 / NCTC 11488 / FDC 602W) (Vibrio succinogenes) protein is CTP synthase.